Reading from the N-terminus, the 249-residue chain is Leucyl/phenylalanyl-tRNA--protein transferase (249 aa).

The segment at 1 to 21 (MSRTLPHLLSPDPASPFPPAE) is disordered.

It belongs to the L/F-transferase family.

It is found in the cytoplasm. The enzyme catalyses N-terminal L-lysyl-[protein] + L-leucyl-tRNA(Leu) = N-terminal L-leucyl-L-lysyl-[protein] + tRNA(Leu) + H(+). It carries out the reaction N-terminal L-arginyl-[protein] + L-leucyl-tRNA(Leu) = N-terminal L-leucyl-L-arginyl-[protein] + tRNA(Leu) + H(+). The catalysed reaction is L-phenylalanyl-tRNA(Phe) + an N-terminal L-alpha-aminoacyl-[protein] = an N-terminal L-phenylalanyl-L-alpha-aminoacyl-[protein] + tRNA(Phe). Functionally, functions in the N-end rule pathway of protein degradation where it conjugates Leu, Phe and, less efficiently, Met from aminoacyl-tRNAs to the N-termini of proteins containing an N-terminal arginine or lysine. The protein is Leucyl/phenylalanyl-tRNA--protein transferase of Xanthomonas campestris pv. campestris (strain B100).